The primary structure comprises 167 residues: SsrA-binding protein (167 aa).

The protein belongs to the SmpB family.

The protein resides in the cytoplasm. Required for rescue of stalled ribosomes mediated by trans-translation. Binds to transfer-messenger RNA (tmRNA), required for stable association of tmRNA with ribosomes. tmRNA and SmpB together mimic tRNA shape, replacing the anticodon stem-loop with SmpB. tmRNA is encoded by the ssrA gene; the 2 termini fold to resemble tRNA(Ala) and it encodes a 'tag peptide', a short internal open reading frame. During trans-translation Ala-aminoacylated tmRNA acts like a tRNA, entering the A-site of stalled ribosomes, displacing the stalled mRNA. The ribosome then switches to translate the ORF on the tmRNA; the nascent peptide is terminated with the 'tag peptide' encoded by the tmRNA and targeted for degradation. The ribosome is freed to recommence translation, which seems to be the essential function of trans-translation. This is SsrA-binding protein from Stenotrophomonas maltophilia (strain R551-3).